The following is a 334-amino-acid chain: tRNA N6-adenosine threonylcarbamoyltransferase (334 aa).

Positions 111 and 115 each coordinate Fe cation. Substrate-binding positions include 134-138 (IVSGG), Asp-167, Gly-180, Asp-184, and Asn-272. Position 300 (Asp-300) interacts with Fe cation.

The protein belongs to the KAE1 / TsaD family. It depends on Fe(2+) as a cofactor.

The protein localises to the cytoplasm. It catalyses the reaction L-threonylcarbamoyladenylate + adenosine(37) in tRNA = N(6)-L-threonylcarbamoyladenosine(37) in tRNA + AMP + H(+). Functionally, required for the formation of a threonylcarbamoyl group on adenosine at position 37 (t(6)A37) in tRNAs that read codons beginning with adenine. Is involved in the transfer of the threonylcarbamoyl moiety of threonylcarbamoyl-AMP (TC-AMP) to the N6 group of A37, together with TsaE and TsaB. TsaD likely plays a direct catalytic role in this reaction. This Dictyoglomus turgidum (strain DSM 6724 / Z-1310) protein is tRNA N6-adenosine threonylcarbamoyltransferase.